The chain runs to 189 residues: Putative manganese efflux pump MntP (189 aa).

The next 6 membrane-spanning stretches (helical) occupy residues 3 to 23 (PVSLIFLAFAMSTDAFAAAIG), 41 to 61 (IIFGVIEAITPLVGWLLGQAA), 65 to 85 (VADWDHWIAFVLLVLLGLHMI), 106 to 128 (WILAVTALATSIDALAVGVGLAF), 141 to 161 (GLATMTMVTLGTMLGRALGAV), and 168 to 188 (MVGGVVLILVGATILYEHLSA).

This sequence belongs to the MntP (TC 9.B.29) family.

It is found in the cell inner membrane. Its function is as follows. Probably functions as a manganese efflux pump. In Pseudomonas aeruginosa (strain LESB58), this protein is Putative manganese efflux pump MntP.